The chain runs to 288 residues: Glucose-1-phosphate thymidylyltransferase (288 aa).

Mg(2+)-binding residues include Asp-108 and Asp-223.

This sequence belongs to the glucose-1-phosphate thymidylyltransferase family. In terms of assembly, homotetramer. It depends on Mg(2+) as a cofactor.

It carries out the reaction dTTP + alpha-D-glucose 1-phosphate + H(+) = dTDP-alpha-D-glucose + diphosphate. Functionally, catalyzes the formation of dTDP-glucose, from dTTP and glucose 1-phosphate, as well as its pyrophosphorolysis. The sequence is that of Glucose-1-phosphate thymidylyltransferase (rmlA1) from Neisseria meningitidis serogroup A / serotype 4A (strain DSM 15465 / Z2491).